A 123-amino-acid chain; its full sequence is Large ribosomal subunit protein bL17 (123 aa).

It belongs to the bacterial ribosomal protein bL17 family. Part of the 50S ribosomal subunit. Contacts protein L32.

This is Large ribosomal subunit protein bL17 from Staphylococcus haemolyticus (strain JCSC1435).